The following is a 259-amino-acid chain: Adenosylcobinamide-GDP ribazoletransferase (259 aa).

The next 6 membrane-spanning stretches (helical) occupy residues 27-47 (ITFL…ILYI), 51-71 (FSHL…NGLN), 100-120 (VGAG…LSLA), 124-144 (LYIG…SMMI), 175-195 (FLAI…VIVA), and 219-239 (VIGF…IIIA).

Belongs to the CobS family. Mg(2+) serves as cofactor.

Its subcellular location is the cell membrane. It carries out the reaction alpha-ribazole + adenosylcob(III)inamide-GDP = adenosylcob(III)alamin + GMP + H(+). It catalyses the reaction alpha-ribazole 5'-phosphate + adenosylcob(III)inamide-GDP = adenosylcob(III)alamin 5'-phosphate + GMP + H(+). It functions in the pathway cofactor biosynthesis; adenosylcobalamin biosynthesis; adenosylcobalamin from cob(II)yrinate a,c-diamide: step 7/7. Its function is as follows. Joins adenosylcobinamide-GDP and alpha-ribazole to generate adenosylcobalamin (Ado-cobalamin). Also synthesizes adenosylcobalamin 5'-phosphate from adenosylcobinamide-GDP and alpha-ribazole 5'-phosphate. This Thermoplasma volcanium (strain ATCC 51530 / DSM 4299 / JCM 9571 / NBRC 15438 / GSS1) protein is Adenosylcobinamide-GDP ribazoletransferase.